Consider the following 188-residue polypeptide: Peptidyl-tRNA hydrolase (188 aa).

Tyrosine 14 is a binding site for tRNA. The active-site Proton acceptor is histidine 19. 3 residues coordinate tRNA: tyrosine 64, asparagine 66, and asparagine 112.

Belongs to the PTH family. As to quaternary structure, monomer.

It is found in the cytoplasm. The catalysed reaction is an N-acyl-L-alpha-aminoacyl-tRNA + H2O = an N-acyl-L-amino acid + a tRNA + H(+). Hydrolyzes ribosome-free peptidyl-tRNAs (with 1 or more amino acids incorporated), which drop off the ribosome during protein synthesis, or as a result of ribosome stalling. Its function is as follows. Catalyzes the release of premature peptidyl moieties from peptidyl-tRNA molecules trapped in stalled 50S ribosomal subunits, and thus maintains levels of free tRNAs and 50S ribosomes. In Clostridium novyi (strain NT), this protein is Peptidyl-tRNA hydrolase.